A 195-amino-acid polypeptide reads, in one-letter code: UDP-N-acetylbacillosamine N-acetyltransferase (195 aa).

Residues 13 to 15 (SGH), 35 to 36 (DD), and Gly56 each bind substrate. The active-site Proton acceptor is the His125. 3 residues coordinate acetyl-CoA: His134, Ile155, and Gly173.

The protein belongs to the transferase hexapeptide repeat family. Homotrimer.

The catalysed reaction is UDP-N-acetylbacillosamine + acetyl-CoA = UDP-N,N'-diacetylbacillosamine + CoA + H(+). The protein operates within protein modification; protein glycosylation. Functionally, acetyltransferase that modifies the UDP-4-amino-sugar to form UDP-N,N'-diacetylbacillosamine in the N-linked protein glycosylation pathway. This chain is UDP-N-acetylbacillosamine N-acetyltransferase (pglD), found in Campylobacter jejuni subsp. jejuni serotype O:2 (strain ATCC 700819 / NCTC 11168).